The primary structure comprises 668 residues: Fructose-1,6-bisphosphatase class 3 (668 aa).

This sequence belongs to the FBPase class 3 family. Mn(2+) is required as a cofactor.

The enzyme catalyses beta-D-fructose 1,6-bisphosphate + H2O = beta-D-fructose 6-phosphate + phosphate. The protein operates within carbohydrate biosynthesis; gluconeogenesis. The chain is Fructose-1,6-bisphosphatase class 3 from Clostridium botulinum (strain ATCC 19397 / Type A).